A 103-amino-acid polypeptide reads, in one-letter code: MVQQPSFSEWQQVLDLVKQAVQQEQHEMLLTMLMTPDEREALVARVNIVHELLQGELSQRQISQMLGVGIATITRGSNELKSRSEDEKAALAQLLMPPPSSEA.

Residues 59-82 mediate DNA binding; the sequence is QRQISQMLGVGIATITRGSNELKS. Over residues 79-89 the composition is skewed to basic and acidic residues; it reads ELKSRSEDEKA. A disordered region spans residues 79 to 103; the sequence is ELKSRSEDEKAALAQLLMPPPSSEA.

The protein belongs to the TrpR family. As to quaternary structure, homodimer.

It is found in the cytoplasm. Its function is as follows. This protein is an aporepressor. When complexed with L-tryptophan it binds the operator region of the trp operon and prevents the initiation of transcription. The chain is Trp operon repressor homolog (trpR) from Vibrio cholerae serotype O1 (strain ATCC 39315 / El Tor Inaba N16961).